The chain runs to 71 residues: Small ribosomal subunit protein bS18c (71 aa).

This sequence belongs to the bacterial ribosomal protein bS18 family. In terms of assembly, part of the 30S ribosomal subunit.

Its subcellular location is the plastid. The protein resides in the chloroplast. The sequence is that of Small ribosomal subunit protein bS18c (rps18) from Mesostigma viride (Green alga).